The following is a 155-amino-acid chain: Putative pre-16S rRNA nuclease (155 aa).

The protein belongs to the YqgF nuclease family.

Its subcellular location is the cytoplasm. Its function is as follows. Could be a nuclease involved in processing of the 5'-end of pre-16S rRNA. In Xylella fastidiosa (strain M23), this protein is Putative pre-16S rRNA nuclease.